The sequence spans 242 residues: 1-(5-phosphoribosyl)-5-[(5-phosphoribosylamino)methylideneamino] imidazole-4-carboxamide isomerase (242 aa).

Catalysis depends on D8, which acts as the Proton acceptor. The Proton donor role is filled by D129.

It belongs to the HisA/HisF family.

The protein localises to the cytoplasm. The catalysed reaction is 1-(5-phospho-beta-D-ribosyl)-5-[(5-phospho-beta-D-ribosylamino)methylideneamino]imidazole-4-carboxamide = 5-[(5-phospho-1-deoxy-D-ribulos-1-ylimino)methylamino]-1-(5-phospho-beta-D-ribosyl)imidazole-4-carboxamide. The protein operates within amino-acid biosynthesis; L-histidine biosynthesis; L-histidine from 5-phospho-alpha-D-ribose 1-diphosphate: step 4/9. This chain is 1-(5-phosphoribosyl)-5-[(5-phosphoribosylamino)methylideneamino] imidazole-4-carboxamide isomerase, found in Erythrobacter litoralis (strain HTCC2594).